The following is a 486-amino-acid chain: Sensor protein PhoQ (486 aa).

The Cytoplasmic portion of the chain corresponds to 1–16 (MKKLLRLFFPLSLRVR). The chain crosses the membrane as a helical span at residues 17–37 (FLLATAAVVLVLSLAYGMVAL). The Periplasmic segment spans residues 38–194 (IGYSVSFDKT…LKSSYMVWSW (157 aa)). A divalent metal cation contacts are provided by Asp-151 and Asp-152. A helical transmembrane segment spans residues 195–215 (FIYVLSANLLLVIPLLWVAAW). Residues 215–266 (WWSLRPIEALAKEVRELEEHNRELLNPATTRELTSLVRNLNRLLKSERERYD) form the HAMP domain. The Cytoplasmic segment spans residues 216–486 (WSLRPIEALA…GRQHSAPKDE (271 aa)). Residues 274–480 (DLTHSLKTPL…RMEVIFGRQH (207 aa)) enclose the Histidine kinase domain. His-277 carries the phosphohistidine; by autocatalysis modification. Asn-385 contacts Mg(2+). Residues 385–393 (NVLDNACKY), 415–420 (DDGPGI), and 434–446 (RVDTLRPGQGVGL) each bind ATP. Residue Gln-442 participates in Mg(2+) binding.

In terms of assembly, homodimer; probably dimerizes via the cytoplasmic domain. Probably interacts with MgrB in the periplasm, altering its activity and that of downstream effector PhoP.

The protein localises to the cell inner membrane. It carries out the reaction ATP + protein L-histidine = ADP + protein N-phospho-L-histidine.. Its activity is regulated as follows. Acetyl-CoA acts as a non-competitive inhibitor of the PhoQ autokinase activity. Feedback inhibited by MgrB, which seems to bind PhoQ, altering its activity and that of downstream effector PhoP. Member of the two-component regulatory system PhoP/PhoQ involved in adaptation to low Mg(2+) environments and the control of acid resistance genes. In low periplasmic Mg(2+), PhoQ functions as a membrane-associated protein kinase that undergoes autophosphorylation and subsequently transfers the phosphate to PhoP, resulting in the expression of PhoP-activated genes (PAG) and repression of PhoP-repressed genes (PRG). In high periplasmic Mg(2+), acts as a protein phosphatase that dephosphorylates phospho-PhoP, resulting in the repression of PAG and may lead to expression of some PRG. PhoP-regulated transcription is redox-sensitive, being activated when the periplasm becomes more reducing (deletion of dsbA/dsbB, or treatment with dithiothreitol). MgrB acts between DsbA/DsbB and PhoP/PhoQ in this pathway; the 2 periplasmic Cys residues of MgrB are required for its action on PhoQ, which then acts on PhoP. Mediates magnesium influx to the cytosol by activation of mgtA. Promotes expression of the two-component regulatory system rstA/rstB and transcription of the hemL, mgrB, nagA, slyB, vboR and yrbL genes. This chain is Sensor protein PhoQ (phoQ), found in Escherichia coli (strain K12).